The primary structure comprises 916 residues: Protein translocase subunit SecA (916 aa).

ATP contacts are provided by residues Gln86, 104-108 (GEGKT), and Asp494. The tract at residues 859 to 916 (LEAPEKPAQLQYTAPSEGGGTQTRVETRSTGRSGNPAKAAEQDAAKDAAKRPAKKKRR) is disordered. The span at 880–891 (QTRVETRSTGRS) shows a compositional bias: polar residues. Residues 898–908 (AEQDAAKDAAK) are compositionally biased toward basic and acidic residues.

The protein belongs to the SecA family. As to quaternary structure, monomer and homodimer. Part of the essential Sec protein translocation apparatus which comprises SecA, SecYEG and auxiliary proteins SecDF. Other proteins may also be involved.

Its subcellular location is the cell membrane. The protein localises to the cytoplasm. The catalysed reaction is ATP + H2O + cellular proteinSide 1 = ADP + phosphate + cellular proteinSide 2.. Part of the Sec protein translocase complex. Interacts with the SecYEG preprotein conducting channel. Has a central role in coupling the hydrolysis of ATP to the transfer of proteins into and across the cell membrane, serving as an ATP-driven molecular motor driving the stepwise translocation of polypeptide chains across the membrane. The polypeptide is Protein translocase subunit SecA (Pseudarthrobacter chlorophenolicus (strain ATCC 700700 / DSM 12829 / CIP 107037 / JCM 12360 / KCTC 9906 / NCIMB 13794 / A6) (Arthrobacter chlorophenolicus)).